Here is a 348-residue protein sequence, read N- to C-terminus: Dihydroorotase (348 aa).

Zn(2+)-binding residues include histidine 17 and histidine 19. Residues 19-21 (HLR) and asparagine 45 each bind substrate. Positions 103, 140, and 178 each coordinate Zn(2+). Lysine 103 carries the post-translational modification N6-carboxylysine. Position 140 (histidine 140) interacts with substrate. Leucine 223 contacts substrate. Residue aspartate 251 participates in Zn(2+) binding. Aspartate 251 is a catalytic residue. Substrate is bound by residues histidine 255 and alanine 267.

The protein belongs to the metallo-dependent hydrolases superfamily. DHOase family. Class II DHOase subfamily. Homodimer. Zn(2+) serves as cofactor.

It catalyses the reaction (S)-dihydroorotate + H2O = N-carbamoyl-L-aspartate + H(+). Its pathway is pyrimidine metabolism; UMP biosynthesis via de novo pathway; (S)-dihydroorotate from bicarbonate: step 3/3. Catalyzes the reversible cyclization of carbamoyl aspartate to dihydroorotate. The protein is Dihydroorotase of Escherichia coli O6:H1 (strain CFT073 / ATCC 700928 / UPEC).